Here is a 255-residue protein sequence, read N- to C-terminus: uncharacterized protein (255 aa).

Residues 1–23 (MKRLNKLVLYISFLILVISFTAG) form the signal peptide. Cys24 carries the N-palmitoyl cysteine lipid modification. Cys24 carries S-diacylglycerol cysteine lipidation.

Belongs to the staphylococcal tandem lipoprotein family.

It localises to the cell membrane. This is an uncharacterized protein from Staphylococcus aureus (strain NCTC 8325 / PS 47).